Here is a 1256-residue protein sequence, read N- to C-terminus: Octopamine receptor beta-3R (1256 aa).

Topologically, residues M1–G143 are extracellular. N-linked (GlcNAc...) asparagine glycosylation is found at N36, N113, and N117. The chain crosses the membrane as a helical span at residues F144–V164. Residues Q165–R171 are Cytoplasmic-facing. A helical membrane pass occupies residues V172–A192. At M193 to C213 the chain is on the extracellular side. The N-linked (GlcNAc...) asparagine glycan is linked to N196. Residues N214–V236 traverse the membrane as a helical segment. The Cytoplasmic segment spans residues D237–C258. The helical transmembrane segment at F259–G279 threads the bilayer. Residues W280 to Y305 lie on the Extracellular side of the membrane. A helical transmembrane segment spans residues A306–W326. Residues R327–T1169 are Cytoplasmic-facing. Disordered regions lie at residues A377–D427, E480–A512, L665–D698, G751–G774, and D1087–R1117. Residues T396–D406 show a composition bias toward acidic residues. Over residues N489–T498 the composition is skewed to polar residues. The span at P757 to P770 shows a compositional bias: pro residues. The helical transmembrane segment at L1170–I1190 threads the bilayer. The Extracellular portion of the chain corresponds to T1191–D1202. The helical transmembrane segment at V1203–Y1223 threads the bilayer. Residues A1224–V1256 lie on the Cytoplasmic side of the membrane.

It belongs to the G-protein coupled receptor 1 family. In terms of tissue distribution, in the adult, expressed in the inferior and superior protocerebrum, the posterior lateral protocerebrum, the deutocerebrum, the surface of the subesophageal ganglion, the lateral cell body region, the cortical layer of the ventral nerve cord and the optic lobe medulla of the central nervous system (CNS). Also expressed in the nurse cells and follicle cells of the egg chambers in the ovary at oogenic stages 1-10, and spermatogonia and spermatocytes in the testis. Expressed ubiquitously in the embryonic CNS. In larvae, expressed in the ventral cortical layer of the ventral nerve cord, the cortical layer of the brain lobes, salivary glands, midgut, imaginal disks and developing reproductive organs. Expressed in the larval prothoracic gland with weak expression in other regions of the ring gland.

It is found in the cell membrane. Autoreceptor for octopamine, which is a neurotransmitter, neurohormone, and neuromodulator in invertebrates. Probably also acts as a receptor for tyramine during ecdysone biosynthesis. Required for the biosynthesis of the steroid hormone ecdysone which is necessary for metamorphosis. Involved in activation of prothoracicotropic hormone and insulin-like peptide signaling which is required for the expression of ecdysone biosynthetic genes. The polypeptide is Octopamine receptor beta-3R (Drosophila melanogaster (Fruit fly)).